Consider the following 1061-residue polypeptide: MTNKALIPSQNSRLPAKPRPRAKGFVELLGRSNFSFLQGASSPEEMVSQAVEFGYDGMALCDLNGLYGVVRGFQTIQSPSLFTASPQVKENFHYLIGSELTLTDESSVVLIPMNKQGYSHLCEILTLGKRQAAKGFSKLSLEQIEKYNQGLLCLALPPWTDERYEKLEKIFDNRLYLPLWRDLTWESQEFCRQGFALEEKYKAQLFVTQRPFMHSPERKPLFDVLTCTLHHTTLAEAKNKLIQNSERCLKSLEDISWLWQDRLDLVEKTVEISARVTFSLNEIRYRYPASSLPSGMTPTEYMRHLTLKGAESRYPEGIPDKALKQIEHELELIKDLQYEDYFLTLKEICDFASERKILYQGRGSAANSVVCFCLGLTAIDPVKMDLLFERFLSRERREPPDIDIDFEHSRREEVIQHIYEKYNERHAAMVCTVIRYRSRMAIRETAKVFGMPLAKINAMIKFMGRDGMKRLLDPAVAADFGMEPGPWKMFMALAQQLHGFPRHLGIHTGGFLITQDPITEMVPVEKATMNGRYVIQWNKDDVDFLRLMKIDVLSLGMLTCLRKCFDLLRDVKGRDYSLATLPADDKPTYDMICRAETVGVFQIESRAQMNTLPRMQPRNFYDLVIEIALIRPGPLQGGMVHPFLKLRQNPPKEIKYAHPALEPILKKTMGIPIFQEQVMKMVVAVADFTPGEADELRRVMSSAWKRKATMGGIEQRLRTGFARHGISSEYADQIFKTIEGFANYGFPESHSASFALLTYASCYLKCHYPDVFACGLLNSQPMGFYAPRTIIAEAQRNGVVVAPLDVQKSDYDYTIEKTAAGDLLRVGLRSIYGIPEVLIRRIEDSRKEEGLYIDLADFIRRTQLPRSVLLKLAAAGAFESFNSNVRELIWNLESLSLDQQSFLWGHPKEQFELGEDDDEPEHLPFESNWDRLRREYDSKGYSVESHPMSVLRTYLHSKSEALREKRFVPYFSSEDLKRMKTKTKVRVAGLVAITQRPPTAKGMCFITLEDEFGFVNIVIHPEIYQKDRTTIYTRSLLEIHGQVEKVGAITNIRAERILPLG.

Belongs to the DNA polymerase type-C family. DnaE2 subfamily.

It localises to the cytoplasm. The catalysed reaction is DNA(n) + a 2'-deoxyribonucleoside 5'-triphosphate = DNA(n+1) + diphosphate. DNA polymerase involved in damage-induced mutagenesis and translesion synthesis (TLS). It is not the major replicative DNA polymerase. In Bdellovibrio bacteriovorus (strain ATCC 15356 / DSM 50701 / NCIMB 9529 / HD100), this protein is Error-prone DNA polymerase.